The chain runs to 110 residues: UPF0060 membrane protein Dtpsy_1668 (110 aa).

A run of 4 helical transmembrane segments spans residues 7-27 (LALF…PWLW), 33-53 (SAWL…LLTL), 63-83 (AAYG…VDGV), and 86-106 (GPWD…IAFA).

It belongs to the UPF0060 family.

It localises to the cell inner membrane. The chain is UPF0060 membrane protein Dtpsy_1668 from Acidovorax ebreus (strain TPSY) (Diaphorobacter sp. (strain TPSY)).